The primary structure comprises 262 residues: Shikimate dehydrogenase (NADP(+)) (262 aa).

Shikimate-binding positions include 15 to 17 and threonine 62; that span reads SRS. Lysine 66 (proton acceptor) is an active-site residue. Residue glutamate 78 participates in NADP(+) binding. Residues asparagine 87 and aspartate 102 each coordinate shikimate. Residues 126 to 130, 150 to 155, and methionine 214 contribute to the NADP(+) site; these read GAGGA and NRTLAR. Tyrosine 216 is a shikimate binding site. An NADP(+)-binding site is contributed by glycine 236.

It belongs to the shikimate dehydrogenase family. In terms of assembly, homodimer.

The enzyme catalyses shikimate + NADP(+) = 3-dehydroshikimate + NADPH + H(+). Its pathway is metabolic intermediate biosynthesis; chorismate biosynthesis; chorismate from D-erythrose 4-phosphate and phosphoenolpyruvate: step 4/7. Functionally, involved in the biosynthesis of the chorismate, which leads to the biosynthesis of aromatic amino acids. Catalyzes the reversible NADPH linked reduction of 3-dehydroshikimate (DHSA) to yield shikimate (SA). In Acinetobacter baumannii (strain AB307-0294), this protein is Shikimate dehydrogenase (NADP(+)).